The following is a 249-amino-acid chain: DNA repair protein RecO (249 aa).

The protein belongs to the RecO family.

Its function is as follows. Involved in DNA repair and RecF pathway recombination. The chain is DNA repair protein RecO from Exiguobacterium sp. (strain ATCC BAA-1283 / AT1b).